The following is a 170-amino-acid chain: Cytochrome b6-f complex subunit 4 (170 aa).

The next 3 helical transmembrane spans lie at 46–66, 105–125, and 141–161; these read LLFM…GLAV, LLGI…PFIE, and TVFL…TLPL.

The protein belongs to the cytochrome b family. PetD subfamily. The 4 large subunits of the cytochrome b6-f complex are cytochrome b6, subunit IV (17 kDa polypeptide, PetD), cytochrome f and the Rieske protein, while the 4 small subunits are PetG, PetL, PetM and PetN. The complex functions as a dimer.

It is found in the cellular thylakoid membrane. Its function is as follows. Component of the cytochrome b6-f complex, which mediates electron transfer between photosystem II (PSII) and photosystem I (PSI), cyclic electron flow around PSI, and state transitions. The polypeptide is Cytochrome b6-f complex subunit 4 (Synechococcus sp. (strain JA-3-3Ab) (Cyanobacteria bacterium Yellowstone A-Prime)).